The primary structure comprises 220 residues: Adenylate kinase (220 aa).

Residue 13-18 coordinates ATP; the sequence is GAGKGT. The tract at residues 33–62 is NMP; it reads ATGDMLRSQVARQTELGKEAKKIMDQGGLV. AMP contacts are provided by residues Thr-34, Arg-39, 60–62, 89–92, and Gln-96; these read GLV and GFPR. The tract at residues 130–167 is LID; the sequence is GRLVHPGSGRSYHLEFNPPKVPMKDDVTGEPLIQRSDD. Residues Arg-131 and 140 to 141 contribute to the ATP site; that span reads SY. The AMP site is built by Arg-164 and Arg-175. ATP is bound at residue Gln-203.

The protein belongs to the adenylate kinase family. AK2 subfamily. Monomer.

It localises to the cytoplasm. The protein resides in the cytosol. The protein localises to the mitochondrion intermembrane space. Its subcellular location is the nucleus. It carries out the reaction AMP + ATP = 2 ADP. Functionally, catalyzes the reversible transfer of the terminal phosphate group between ATP and AMP. Plays an important role in cellular energy homeostasis and in adenine nucleotide metabolism. Adenylate kinase activity is critical for regulation of the phosphate utilization and the AMP de novo biosynthesis pathways. This is Adenylate kinase (adk1) from Schizosaccharomyces pombe (strain 972 / ATCC 24843) (Fission yeast).